The sequence spans 175 residues: Acireductone dioxygenase (175 aa).

Residues His-81, His-83, Glu-87, and His-126 each coordinate Fe(2+). Residues His-81, His-83, Glu-87, and His-126 each coordinate Ni(2+).

It belongs to the acireductone dioxygenase (ARD) family. Requires Fe(2+) as cofactor. Ni(2+) serves as cofactor.

The protein localises to the cytoplasm. It is found in the nucleus. It carries out the reaction 1,2-dihydroxy-5-(methylsulfanyl)pent-1-en-3-one + O2 = 4-methylsulfanyl-2-oxobutanoate + formate + 2 H(+). It catalyses the reaction 1,2-dihydroxy-5-(methylsulfanyl)pent-1-en-3-one + O2 = 3-(methylsulfanyl)propanoate + CO + formate + 2 H(+). Its pathway is amino-acid biosynthesis; L-methionine biosynthesis via salvage pathway; L-methionine from S-methyl-5-thio-alpha-D-ribose 1-phosphate: step 5/6. Its function is as follows. Catalyzes 2 different reactions between oxygen and the acireductone 1,2-dihydroxy-3-keto-5-methylthiopentene (DHK-MTPene) depending upon the metal bound in the active site. Fe-containing acireductone dioxygenase (Fe-ARD) produces formate and 2-keto-4-methylthiobutyrate (KMTB), the alpha-ketoacid precursor of methionine in the methionine recycle pathway. Ni-containing acireductone dioxygenase (Ni-ARD) produces methylthiopropionate, carbon monoxide and formate, and does not lie on the methionine recycle pathway. The chain is Acireductone dioxygenase from Phaeosphaeria nodorum (strain SN15 / ATCC MYA-4574 / FGSC 10173) (Glume blotch fungus).